An 86-amino-acid polypeptide reads, in one-letter code: Cell division topological specificity factor (86 aa).

The protein belongs to the MinE family.

In terms of biological role, prevents the cell division inhibition by proteins MinC and MinD at internal division sites while permitting inhibition at polar sites. This ensures cell division at the proper site by restricting the formation of a division septum at the midpoint of the long axis of the cell. This chain is Cell division topological specificity factor, found in Aliivibrio salmonicida (strain LFI1238) (Vibrio salmonicida (strain LFI1238)).